The sequence spans 382 residues: UDP-4-amino-4-deoxy-L-arabinose--oxoglutarate aminotransferase (382 aa).

At Lys-183 the chain carries N6-(pyridoxal phosphate)lysine.

Belongs to the DegT/DnrJ/EryC1 family. ArnB subfamily. As to quaternary structure, homodimer. It depends on pyridoxal 5'-phosphate as a cofactor.

The enzyme catalyses UDP-4-amino-4-deoxy-beta-L-arabinose + 2-oxoglutarate = UDP-beta-L-threo-pentopyranos-4-ulose + L-glutamate. It participates in nucleotide-sugar biosynthesis; UDP-4-deoxy-4-formamido-beta-L-arabinose biosynthesis; UDP-4-deoxy-4-formamido-beta-L-arabinose from UDP-alpha-D-glucuronate: step 2/3. The protein operates within bacterial outer membrane biogenesis; lipopolysaccharide biosynthesis. Its function is as follows. Catalyzes the conversion of UDP-4-keto-arabinose (UDP-Ara4O) to UDP-4-amino-4-deoxy-L-arabinose (UDP-L-Ara4N). The modified arabinose is attached to lipid A and is required for resistance to polymyxin and cationic antimicrobial peptides. The protein is UDP-4-amino-4-deoxy-L-arabinose--oxoglutarate aminotransferase of Pseudomonas aeruginosa (strain ATCC 15692 / DSM 22644 / CIP 104116 / JCM 14847 / LMG 12228 / 1C / PRS 101 / PAO1).